The following is a 313-amino-acid chain: Dimethyladenosine transferase (313 aa).

Residues 1-22 (MPKIKSAASGRRRERQQQRGQL) are disordered. S-adenosyl-L-methionine-binding residues include His37, Leu39, Gly64, Glu85, Asp113, and Asn128.

The protein belongs to the class I-like SAM-binding methyltransferase superfamily. rRNA adenine N(6)-methyltransferase family. As to quaternary structure, part of the small subunit (SSU) processome, composed of more than 70 proteins and the RNA chaperone small nucleolar RNA (snoRNA) U3.

Its subcellular location is the nucleus. It is found in the nucleoplasm. The protein resides in the nucleolus. It carries out the reaction adenosine(1779)/adenosine(1780) in 18S rRNA + 4 S-adenosyl-L-methionine = N(6)-dimethyladenosine(1779)/N(6)-dimethyladenosine(1780) in 18S rRNA + 4 S-adenosyl-L-homocysteine + 4 H(+). In terms of biological role, specifically dimethylates two adjacent adenosines in the loop of a conserved hairpin near the 3'-end of 18S rRNA in the 40S particle. Involved in the pre-rRNA processing steps leading to small-subunit rRNA production independently of its RNA-modifying catalytic activity. Part of the small subunit (SSU) processome, first precursor of the small eukaryotic ribosomal subunit. During the assembly of the SSU processome in the nucleolus, many ribosome biogenesis factors, an RNA chaperone and ribosomal proteins associate with the nascent pre-rRNA and work in concert to generate RNA folding, modifications, rearrangements and cleavage as well as targeted degradation of pre-ribosomal RNA by the RNA exosome. This Bos taurus (Bovine) protein is Dimethyladenosine transferase (DIMT1).